Reading from the N-terminus, the 236-residue chain is L-aspartate dehydrogenase (236 aa).

Residues 10–11, Asp31, 58–59, Tyr66, 80–81, Ala111, and Asn162 contribute to the NAD(+) site; these read AI, AS, and LS. His189 is a catalytic residue. 212–215 lines the NAD(+) pocket; sequence NPKT.

This sequence belongs to the L-aspartate dehydrogenase family. Homodimer.

The enzyme catalyses L-aspartate + NADP(+) + H2O = oxaloacetate + NH4(+) + NADPH + H(+). It carries out the reaction L-aspartate + NAD(+) + H2O = oxaloacetate + NH4(+) + NADH + H(+). It functions in the pathway cofactor biosynthesis; NAD(+) biosynthesis; iminoaspartate from L-aspartate (dehydrogenase route): step 1/1. Specifically catalyzes the NAD or NADP-dependent dehydrogenation of L-aspartate to iminoaspartate. The chain is L-aspartate dehydrogenase from Archaeoglobus fulgidus (strain ATCC 49558 / DSM 4304 / JCM 9628 / NBRC 100126 / VC-16).